The sequence spans 38 residues: Large ribosomal subunit protein bL36 (38 aa).

Belongs to the bacterial ribosomal protein bL36 family.

This Karelsulcia muelleri (strain GWSS) (Sulcia muelleri) protein is Large ribosomal subunit protein bL36.